We begin with the raw amino-acid sequence, 183 residues long: ADP-ribosylation factor 3 (183 aa).

A lipid anchor (N-myristoyl glycine) is attached at G2. Residues G24–T31, D67–Q71, and N126–D129 contribute to the GTP site.

The protein belongs to the small GTPase superfamily. Arf family. Interacts with RUD3.

The protein resides in the golgi apparatus. Its function is as follows. GTP-binding protein involved in protein trafficking; may modulate vesicle budding and uncoating within the Golgi apparatus. The chain is ADP-ribosylation factor 3 (ARF3) from Saccharomyces cerevisiae (strain ATCC 204508 / S288c) (Baker's yeast).